The following is a 439-amino-acid chain: MGVANDSSPEYQWMSPHRLSDTVILGDCLYFNNIMSQLDLHQNWAPSVRLLNYFKNFNRETLLKIEENDYINSSFFQQKDKRFYPINDDFYHISTGGYGIVFKIDNYVVKFVFEATKLYSPMETTAEFTVPKFLYNNLKGDEKKLIVCAWAMGLNYKLTFLHTLYKRVLHMLLLLIQTMDGQELSLRYSSKVFLKAFNERKDSIKFVKLLSHFYPAVINSNINVINYFNRMFHFFEHEKRTNYEYERGNIIIFPLALYSADKVDTELAIKLGFKSLVQYIKFIFLQMALLYIKIYELPCCDNFLHADLKPDNILLFDSNEPIIIHLKDKKFVFNERIKSALNDFDFSQVAGIINKKIKNNFKVKHNWYYDFHFFVHTLLKTYPEIEKDIEFSTALEEFIMCTKTDCDKYRLKVSILHPISFLEKFIMRDIFSDWINGGN.

Positions 87–439 constitute a Protein kinase domain; the sequence is NDDFYHISTG…IFSDWINGGN (353 aa). ATP contacts are provided by residues 93–101 and lysine 117; that span reads ISTGGYGIV. Aspartate 307 acts as the Proton acceptor in catalysis.

This sequence belongs to the protein kinase superfamily. Ser/Thr protein kinase family. Poxviruses subfamily. Post-translationally, phosphorylated in vivo. Autophosphorylated in vitro.

It localises to the host endoplasmic reticulum. The protein resides in the host endoplasmic reticulum-Golgi intermediate compartment. It carries out the reaction L-seryl-[protein] + ATP = O-phospho-L-seryl-[protein] + ADP + H(+). The enzyme catalyses L-threonyl-[protein] + ATP = O-phospho-L-threonyl-[protein] + ADP + H(+). Its function is as follows. Essential serine-protein kinase involved in the early stage of virion morphogenesis. This is Serine/threonine-protein kinase 2 (OPG054) from Vaccinia virus (strain Copenhagen) (VACV).